The chain runs to 267 residues: Coiled-coil domain-containing protein 172 (267 aa).

Coiled-coil stretches lie at residues 24-97 (MREV…CEAI) and 128-191 (LMKE…EETE).

Belongs to the CCDC172 family. In terms of assembly, may interact with TEKT2.

Its subcellular location is the cytoplasm. It is found in the cell projection. It localises to the cilium. The chain is Coiled-coil domain-containing protein 172 (Ccdc172) from Mus musculus (Mouse).